Reading from the N-terminus, the 200-residue chain is NADH-quinone oxidoreductase subunit C (200 aa).

It belongs to the complex I 30 kDa subunit family. NDH-1 is composed of 14 different subunits. Subunits NuoB, C, D, E, F, and G constitute the peripheral sector of the complex.

The protein resides in the cell inner membrane. It carries out the reaction a quinone + NADH + 5 H(+)(in) = a quinol + NAD(+) + 4 H(+)(out). In terms of biological role, NDH-1 shuttles electrons from NADH, via FMN and iron-sulfur (Fe-S) centers, to quinones in the respiratory chain. The immediate electron acceptor for the enzyme in this species is believed to be ubiquinone. Couples the redox reaction to proton translocation (for every two electrons transferred, four hydrogen ions are translocated across the cytoplasmic membrane), and thus conserves the redox energy in a proton gradient. This Ralstonia pickettii (strain 12J) protein is NADH-quinone oxidoreductase subunit C.